Here is a 278-residue protein sequence, read N- to C-terminus: HTH-type transcriptional activator RhaS (278 aa).

Residues 174–272 enclose the HTH araC/xylS-type domain; sequence NQLMAWLEDH…NWSPRDIRQG (99 aa). 2 DNA-binding regions (H-T-H motif) span residues 191–212 and 239–262; these read EAVA…KQHT and VTEI…RREF.

Binds DNA as a dimer.

The protein localises to the cytoplasm. Its function is as follows. Activates expression of the rhaBAD and rhaT operons. The chain is HTH-type transcriptional activator RhaS from Salmonella dublin (strain CT_02021853).